Here is a 492-residue protein sequence, read N- to C-terminus: NADH-quinone oxidoreductase subunit N (492 aa).

Helical transmembrane passes span 16–36, 44–64, 81–101, 111–131, 134–154, 168–188, 210–230, 244–264, 276–296, 306–326, 332–352, 382–402, 423–443, and 463–483; these read LLIP…VGVF, LYIT…FLEG, ISLL…LFFM, GAEF…MASS, LILI…LIAL, FIMG…LYAA, ILVF…VTLV, NALL…AVII, AFVE…PNLI, MLAY…LINT, VIFF…GILW, LAIL…FCVF, IMAI…IYIF, and FALS…QNLL.

Belongs to the complex I subunit 2 family. In terms of assembly, NDH-1 is composed of 14 different subunits. Subunits NuoA, H, J, K, L, M, N constitute the membrane sector of the complex.

Its subcellular location is the cell inner membrane. The catalysed reaction is a quinone + NADH + 5 H(+)(in) = a quinol + NAD(+) + 4 H(+)(out). NDH-1 shuttles electrons from NADH, via FMN and iron-sulfur (Fe-S) centers, to quinones in the respiratory chain. The immediate electron acceptor for the enzyme in this species is believed to be ubiquinone. Couples the redox reaction to proton translocation (for every two electrons transferred, four hydrogen ions are translocated across the cytoplasmic membrane), and thus conserves the redox energy in a proton gradient. This chain is NADH-quinone oxidoreductase subunit N, found in Helicobacter hepaticus (strain ATCC 51449 / 3B1).